Reading from the N-terminus, the 198-residue chain is Proteasome subunit beta 1 (198 aa).

Positions 1-8 (MSMYMPGA) are cleaved as a propeptide — removed in mature form; by autocatalysis. The Nucleophile role is filled by threonine 9.

It belongs to the peptidase T1B family. The 20S proteasome core is composed of 14 alpha and 14 beta subunits that assemble into four stacked heptameric rings, resulting in a barrel-shaped structure. The two inner rings, each composed of seven catalytic beta subunits, are sandwiched by two outer rings, each composed of seven alpha subunits. The catalytic chamber with the active sites is on the inside of the barrel. Has a gated structure, the ends of the cylinder being occluded by the N-termini of the alpha-subunits. Is capped at one or both ends by the proteasome regulatory ATPase, PAN.

Its subcellular location is the cytoplasm. The catalysed reaction is Cleavage of peptide bonds with very broad specificity.. With respect to regulation, the formation of the proteasomal ATPase PAN-20S proteasome complex, via the docking of the C-termini of PAN into the intersubunit pockets in the alpha-rings, triggers opening of the gate for substrate entry. Interconversion between the open-gate and close-gate conformations leads to a dynamic regulation of the 20S proteasome proteolysis activity. Its function is as follows. Component of the proteasome core, a large protease complex with broad specificity involved in protein degradation. The chain is Proteasome subunit beta 1 from Nitrosopumilus maritimus (strain SCM1).